We begin with the raw amino-acid sequence, 114 residues long: uncharacterized protein (114 aa).

This sequence to M.kandleri MK0008.

This is an uncharacterized protein from Methanocaldococcus jannaschii (strain ATCC 43067 / DSM 2661 / JAL-1 / JCM 10045 / NBRC 100440) (Methanococcus jannaschii).